Consider the following 194-residue polypeptide: Small ribosomal subunit protein uS5 (194 aa).

The 64-residue stretch at 26 to 89 folds into the S5 DRBM domain; sequence LEEKVVEIRR…ADAKKHLIRV (64 aa).

This sequence belongs to the universal ribosomal protein uS5 family. In terms of assembly, part of the 30S ribosomal subunit. Contacts proteins S4 and S8.

Its function is as follows. With S4 and S12 plays an important role in translational accuracy. Located at the back of the 30S subunit body where it stabilizes the conformation of the head with respect to the body. In Persephonella marina (strain DSM 14350 / EX-H1), this protein is Small ribosomal subunit protein uS5.